Consider the following 592-residue polypeptide: UPF0329 protein ECU01_0110/ECU01_1500/ECU08_0040 (592 aa).

2 stretches are compositionally biased toward basic and acidic residues: residues 306–339 (RQRRREREIEKNMKELMRDEEKAKSKEKAKSKEK) and 353–362 (EAKEEEKKES). The disordered stretch occupies residues 306-404 (RQRRREREIE…RKRYKIHRRV (99 aa)).

This sequence belongs to the UPF0329 family.

In Encephalitozoon cuniculi (strain GB-M1) (Microsporidian parasite), this protein is UPF0329 protein ECU01_0110/ECU01_1500/ECU08_0040.